The sequence spans 252 residues: tRNA-cytidine(32) 2-sulfurtransferase (252 aa).

The PP-loop motif motif lies at 37 to 42 (SGGKDS). 3 residues coordinate [4Fe-4S] cluster: Cys112, Cys115, and Cys202.

Belongs to the TtcA family. In terms of assembly, homodimer. Mg(2+) is required as a cofactor. It depends on [4Fe-4S] cluster as a cofactor.

The protein resides in the cytoplasm. It catalyses the reaction cytidine(32) in tRNA + S-sulfanyl-L-cysteinyl-[cysteine desulfurase] + AH2 + ATP = 2-thiocytidine(32) in tRNA + L-cysteinyl-[cysteine desulfurase] + A + AMP + diphosphate + H(+). It participates in tRNA modification. Functionally, catalyzes the ATP-dependent 2-thiolation of cytidine in position 32 of tRNA, to form 2-thiocytidine (s(2)C32). The sulfur atoms are provided by the cysteine/cysteine desulfurase (IscS) system. This Geotalea uraniireducens (strain Rf4) (Geobacter uraniireducens) protein is tRNA-cytidine(32) 2-sulfurtransferase.